The sequence spans 190 residues: Putative phosphatidylethanolamine-binding protein (190 aa).

The protein belongs to the phosphatidylethanolamine-binding protein family.

In Plasmodium falciparum, this protein is Putative phosphatidylethanolamine-binding protein.